The following is a 222-amino-acid chain: 7-cyano-7-deazaguanine synthase (222 aa).

ATP is bound at residue Ile-9–Ala-19. Zn(2+)-binding residues include Cys-188, Cys-196, Cys-199, and Cys-202.

The protein belongs to the QueC family. It depends on Zn(2+) as a cofactor.

The catalysed reaction is 7-carboxy-7-deazaguanine + NH4(+) + ATP = 7-cyano-7-deazaguanine + ADP + phosphate + H2O + H(+). It participates in purine metabolism; 7-cyano-7-deazaguanine biosynthesis. Catalyzes the ATP-dependent conversion of 7-carboxy-7-deazaguanine (CDG) to 7-cyano-7-deazaguanine (preQ(0)). The protein is 7-cyano-7-deazaguanine synthase of Sulfurovum sp. (strain NBC37-1).